Reading from the N-terminus, the 334-residue chain is HTH-type transcriptional repressor PurR (334 aa).

Residues 2 to 56 form the HTH lacI-type domain; it reads ATIKDVARLAGVSTTTVSHVINKTRFVAEATQEKVMKAVDELNYAPSAVARSLKC. Positions 4 to 23 form a DNA-binding region, H-T-H motif; sequence IKDVARLAGVSTTTVSHVIN. A DNA-binding region spans residues 48–56; the sequence is SAVARSLKC. Hypoxanthine is bound by residues Phe73, Lys189, Phe220, and Asp274.

In terms of assembly, homodimer.

Its pathway is purine metabolism; purine nucleotide biosynthesis [regulation]. In terms of biological role, is the main repressor of the genes involved in the de novo synthesis of purine nucleotides, regulating purB, purC, purEK, purF, purHD, purL, purMN and guaBA expression. PurR is allosterically activated to bind its cognate DNA by binding the purine corepressors, hypoxanthine or guanine, thereby effecting transcription repression. The protein is HTH-type transcriptional repressor PurR of Vibrio parahaemolyticus serotype O3:K6 (strain RIMD 2210633).